The sequence spans 184 residues: ATP-dependent protease subunit HslV (184 aa).

T12 is a catalytic residue. Positions 166, 169, and 172 each coordinate Na(+).

Belongs to the peptidase T1B family. HslV subfamily. In terms of assembly, a double ring-shaped homohexamer of HslV is capped on each side by a ring-shaped HslU homohexamer. The assembly of the HslU/HslV complex is dependent on binding of ATP.

Its subcellular location is the cytoplasm. The catalysed reaction is ATP-dependent cleavage of peptide bonds with broad specificity.. Allosterically activated by HslU binding. Functionally, protease subunit of a proteasome-like degradation complex believed to be a general protein degrading machinery. The polypeptide is ATP-dependent protease subunit HslV (Nitrobacter hamburgensis (strain DSM 10229 / NCIMB 13809 / X14)).